The sequence spans 490 residues: MVPVVALVGRPNVGKSTLFNRLTRTRDALVADFPGLTRDRKYGRAEVEGREFICIDTGGIDGTEDGVETRMAEQSLLAIEEADIVLFMVDARAGLMPADTAIAKHLRSREKPTFLVANKTDGIDADQAVADFWALGLGEIYPIAASHGRGVTSLLETVLMPWVDEINPPEEIDEDAAYWAQFEEAVEGKEEPVDDFNPQDLPIKLAIVGRPNVGKSTLTNRILGEDRVVVYDMPGTTRDSIYIPMQRDEREYVLIDTAGVRKRGKITDVVEKFSVIKTLQAIEDANVVMLVIDAREGISDQDLSLLGFILNSGRSLVIVVNKWDGLSNDVREQVKEMLDFRLGFIDFARIHFISALHGSGVGNLFESVREAYDSSTRRQSTAMLTRIMTMASEDHQPPLVRGRRVKLKYAHAGGYNPPIVVIHGNQVKDLPDSYKRYLMNYFRKSLDVMGTPIRIQFKEGENPFADKRNTLTPNQMRKRKRLIKHIKKSK.

2 consecutive EngA-type G domains span residues 3–166 (PVVA…VDEI) and 203–376 (IKLA…DSST). Residues 9–16 (GRPNVGKS), 56–60 (DTGGI), 118–121 (NKTD), 209–216 (GRPNVGKS), 256–260 (DTAGV), and 321–324 (NKWD) contribute to the GTP site. A KH-like domain is found at 377–461 (RRQSTAMLTR…PIRIQFKEGE (85 aa)).

The protein belongs to the TRAFAC class TrmE-Era-EngA-EngB-Septin-like GTPase superfamily. EngA (Der) GTPase family. As to quaternary structure, associates with the 50S ribosomal subunit.

Its function is as follows. GTPase that plays an essential role in the late steps of ribosome biogenesis. This is GTPase Der from Enterobacter sp. (strain 638).